We begin with the raw amino-acid sequence, 357 residues long: Chorismate synthase (357 aa).

Arg-47 contacts NADP(+). Residues Arg-123–Ser-125, Gly-281, Lys-296–Ser-300, and Arg-324 each bind FMN.

It belongs to the chorismate synthase family. In terms of assembly, homotetramer. FMNH2 is required as a cofactor.

The enzyme catalyses 5-O-(1-carboxyvinyl)-3-phosphoshikimate = chorismate + phosphate. It participates in metabolic intermediate biosynthesis; chorismate biosynthesis; chorismate from D-erythrose 4-phosphate and phosphoenolpyruvate: step 7/7. Catalyzes the anti-1,4-elimination of the C-3 phosphate and the C-6 proR hydrogen from 5-enolpyruvylshikimate-3-phosphate (EPSP) to yield chorismate, which is the branch point compound that serves as the starting substrate for the three terminal pathways of aromatic amino acid biosynthesis. This reaction introduces a second double bond into the aromatic ring system. The sequence is that of Chorismate synthase from Chlamydia trachomatis serovar D (strain ATCC VR-885 / DSM 19411 / UW-3/Cx).